A 221-amino-acid polypeptide reads, in one-letter code: Endo-1,4-beta-xylanase 1 (221 aa).

An N-terminal signal peptide occupies residues 1 to 22 (MKFFATIAALVVAAVAAPVAEA). One can recognise a GH11 domain in the interval 29-221 (PMLIERAGPG…GTGSASVTVS (193 aa)). Glutamate 114 (nucleophile) is an active-site residue. Glutamate 208 serves as the catalytic Proton donor.

The protein belongs to the glycosyl hydrolase 11 (cellulase G) family.

It is found in the secreted. The enzyme catalyses Endohydrolysis of (1-&gt;4)-beta-D-xylosidic linkages in xylans.. The protein operates within glycan degradation; xylan degradation. Functionally, endo-1,4-beta-xylanase involved in the hydrolysis of xylan, a major structural heterogeneous polysaccharide found in plant biomass representing the second most abundant polysaccharide in the biosphere, after cellulose. Hydrolyzes xylans from oat spelt and birchwood at similar rates, but it has no detectable activity toward Avicel or carboxymethyl cellulose. The protein is Endo-1,4-beta-xylanase 1 (xynI) of Aureobasidium pullulans (Black yeast).